Consider the following 59-residue polypeptide: UPF0181 protein YoaH (59 aa).

This sequence belongs to the UPF0181 family.

The polypeptide is UPF0181 protein YoaH (Shigella sonnei (strain Ss046)).